Reading from the N-terminus, the 249-residue chain is MAKILISALLCVAMFGSMALGSPECPTPNGRFASGDQCDSYTECQDGTPVEKLCPDGLLFHQRTKATGECTYAPYSTCKERARLQPANGTEECPRQFGFYPNGDATKCGVYRNCAHGVASLTKCPEGLAFNEETYQCDWPDLVESCNAEAYLGFNCPAADSADDSAAAAVDVSPEGELRYYRHPQTCKKYFVCVNGHPRLYNCGKYLAFNSQTKLCDFYNKVPECYALLKEKQRLKAEKQQPQVAQPED.

Residues 1-21 (MAKILISALLCVAMFGSMALG) form the signal peptide. The region spanning 22 to 80 (SPECPTPNGRFASGDQCDSYTECQDGTPVEKLCPDGLLFHQRTKATGECTYAPYSTCKE) is the Chitin-binding type-2 1 domain. Cysteine 54 and cysteine 70 are disulfide-bonded. A glycan (N-linked (GlcNAc...) asparagine) is linked at asparagine 88. Chitin-binding type-2 domains follow at residues 90–148 (TEEC…SCNA) and 170–227 (VDVS…ECYA). 2 disulfide bridges follow: cysteine 124–cysteine 137 and cysteine 203–cysteine 216.

As to expression, uniformly expressed throughout the cuticle of third instar larva.

Its subcellular location is the secreted. The protein resides in the extracellular space. It localises to the extracellular matrix. Its function is as follows. Chitin-binding protein that is important for the longitudinal contraction and lateral expansion of the larval cuticle during its conversion into the oval-shaped puparium case. Essential for survival to the second instar larval stage. Confers the orientated contractility and expandability of the larval cuticle by regulating the arrangement of chitin and the formation of supracellular ridges on the cuticle of third instar larvae. Essential for determining pupal body shape; required for the orientated shape change of the cuticle during metamorphosis which involves changes in the morphology of the supracellular ridges. Mainly involved in regulating pupal shape. In terms of biological role, mainly involved in larvae survival, possibly by maintaining the normal morphology of the larval hindgut during development. The sequence is that of Protein obstructor-E from Drosophila melanogaster (Fruit fly).